Here is a 321-residue protein sequence, read N- to C-terminus: D-alanine--D-alanine ligase (321 aa).

Residues 103-303 (KKILTPENIP…YVALCRMIVE (201 aa)) form the ATP-grasp domain. 129–186 (PLPRPYVLKPVNEGSSVGVAIIDESFNDGQPIRKDQIDPWKNFKTLLAEPFIKGRELT) provides a ligand contact to ATP. The Mg(2+) site is built by D254, E270, and N272.

It belongs to the D-alanine--D-alanine ligase family. Mg(2+) serves as cofactor. Requires Mn(2+) as cofactor.

The protein localises to the cytoplasm. It catalyses the reaction 2 D-alanine + ATP = D-alanyl-D-alanine + ADP + phosphate + H(+). It participates in cell wall biogenesis; peptidoglycan biosynthesis. Its function is as follows. Cell wall formation. The polypeptide is D-alanine--D-alanine ligase (Zymomonas mobilis subsp. mobilis (strain ATCC 31821 / ZM4 / CP4)).